The chain runs to 251 residues: Triosephosphate isomerase (251 aa).

9-11 (NWK) contacts substrate. The active-site Electrophile is H95. E167 serves as the catalytic Proton acceptor. Residues G173, S213, and 234–235 (GG) contribute to the substrate site.

This sequence belongs to the triosephosphate isomerase family. As to quaternary structure, homodimer.

Its subcellular location is the cytoplasm. The enzyme catalyses D-glyceraldehyde 3-phosphate = dihydroxyacetone phosphate. Its pathway is carbohydrate biosynthesis; gluconeogenesis. The protein operates within carbohydrate degradation; glycolysis; D-glyceraldehyde 3-phosphate from glycerone phosphate: step 1/1. Involved in the gluconeogenesis. Catalyzes stereospecifically the conversion of dihydroxyacetone phosphate (DHAP) to D-glyceraldehyde-3-phosphate (G3P). The chain is Triosephosphate isomerase from Pediococcus pentosaceus (strain ATCC 25745 / CCUG 21536 / LMG 10740 / 183-1w).